Consider the following 277-residue polypeptide: NADPH-dependent 7-cyano-7-deazaguanine reductase (277 aa).

83–85 (VES) serves as a coordination point for substrate. 85–86 (SK) serves as a coordination point for NADPH. Cysteine 184 functions as the Thioimide intermediate in the catalytic mechanism. Catalysis depends on aspartate 191, which acts as the Proton donor. 223-224 (HE) is a substrate binding site. 252–253 (RG) contacts NADPH.

Belongs to the GTP cyclohydrolase I family. QueF type 2 subfamily. In terms of assembly, homodimer.

It localises to the cytoplasm. It carries out the reaction 7-aminomethyl-7-carbaguanine + 2 NADP(+) = 7-cyano-7-deazaguanine + 2 NADPH + 3 H(+). The protein operates within tRNA modification; tRNA-queuosine biosynthesis. Functionally, catalyzes the NADPH-dependent reduction of 7-cyano-7-deazaguanine (preQ0) to 7-aminomethyl-7-deazaguanine (preQ1). In Cupriavidus taiwanensis (strain DSM 17343 / BCRC 17206 / CCUG 44338 / CIP 107171 / LMG 19424 / R1) (Ralstonia taiwanensis (strain LMG 19424)), this protein is NADPH-dependent 7-cyano-7-deazaguanine reductase.